Consider the following 742-residue polypeptide: MEEGFRDRAAFIRGAKDIAKEVKKHAAKKVVKGLDRVQDEYSRRSYSRFEEEDDDDDFPAPSDGYYRGEGTQDEEEGGASSDATEGHDEDDEIYEGEYQGIPRAESGGKGERMADGAPLAGVRGGLSDGEGPPGGRGEAQRRKEREELAQQYEAILRECGHGRFQWTLYFVLGLALMADGVEVFVVGFVLPSAEKDMCLSDSNKGMLGLIVYLGMMVGAFLWGGLADRLGRRQCLLISLSVNSVFAFFSSFVQGYGTFLFCRLLSGVGIGGSIPIVFSYFSEFLAQEKRGEHLSWLCMFWMIGGVYAAAMAWAIIPHYGWSFQMGSAYQFHSWRVFVLVCAFPSVFAIGALTTQPESPRFFLENGKHDEAWMVLKQVHDTNMRAKGHPERVFSVTHIKTIHQEDELIEIQSDTGTWYQRWGVRALSLGGQVWGNFLSCFGPEYRRITLMMMGVWFTMSFSYYGLTVWFPDMIRHLQAVDYASRTKVFPGERVEHVTFNFTLENQIHRGGQYFNDKFIGLRLKSVSFEDSLFEECYFEDVTSSNTFFRNCTFINTVFYNTDLFEYKFVNSRLINSTFLHNKEGCPLDVTGTGEGAYMVYFVSFLGTLAVLPGNIVSALLMDKIGRLRMLAGSSVMSCVSCFFLSFGNSESAMIALLCLFGGVSIASWNALDVLTVELYPSDKRTTAFGFLNALCKLAAVLGISIFTSFVGITKAAPILFASAALALGSSLALKLPETRGQVLQ.

Positions 1–57 (MEEGFRDRAAFIRGAKDIAKEVKKHAAKKVVKGLDRVQDEYSRRSYSRFEEEDDDDD) are interaction with SYT1. Over 1–169 (MEEGFRDRAA…GHGRFQWTLY (169 aa)) the chain is Cytoplasmic. Basic and acidic residues predominate over residues 33–49 (GLDRVQDEYSRRSYSRF). A disordered region spans residues 33-144 (GLDRVQDEYS…GRGEAQRRKE (112 aa)). Phosphoserine is present on residues Ser80 and Ser81. A Phosphothreonine modification is found at Thr84. Residues 122–137 (VRGGLSDGEGPPGGRG) are compositionally biased toward gly residues. Ser127 bears the Phosphoserine mark. A helical membrane pass occupies residues 170-190 (FVLGLALMADGVEVFVVGFVL). Residues 191–205 (PSAEKDMCLSDSNKG) are Extracellular-facing. The chain crosses the membrane as a helical span at residues 206 to 226 (MLGLIVYLGMMVGAFLWGGLA). The Cytoplasmic segment spans residues 227-233 (DRLGRRQ). A helical membrane pass occupies residues 234-254 (CLLISLSVNSVFAFFSSFVQG). Over 255–262 (YGTFLFCR) the chain is Extracellular. A helical transmembrane segment spans residues 263–283 (LLSGVGIGGSIPIVFSYFSEF). Residues 284–294 (LAQEKRGEHLS) lie on the Cytoplasmic side of the membrane. The helical transmembrane segment at 295–315 (WLCMFWMIGGVYAAAMAWAII) threads the bilayer. The Extracellular segment spans residues 316–334 (PHYGWSFQMGSAYQFHSWR). Residues 335-355 (VFVLVCAFPSVFAIGALTTQP) traverse the membrane as a helical segment. Residues 356-447 (ESPRFFLENG…CFGPEYRRIT (92 aa)) are Cytoplasmic-facing. Residue Ser393 is modified to Phosphoserine. A helical transmembrane segment spans residues 448–468 (LMMMGVWFTMSFSYYGLTVWF). Topologically, residues 469–598 (PDMIRHLQAV…GTGEGAYMVY (130 aa)) are extracellular. Tyr480 carries the post-translational modification Phosphotyrosine. N-linked (GlcNAc...) asparagine glycans are attached at residues Asn498, Asn548, and Asn573. A helical membrane pass occupies residues 599 to 619 (FVSFLGTLAVLPGNIVSALLM). Residues 620-626 (DKIGRLR) are Cytoplasmic-facing. A helical transmembrane segment spans residues 627-647 (MLAGSSVMSCVSCFFLSFGNS). At 648-651 (ESAM) the chain is on the extracellular side. A helical membrane pass occupies residues 652-672 (IALLCLFGGVSIASWNALDVL). The Cytoplasmic segment spans residues 673–685 (TVELYPSDKRTTA). Residues 686–708 (FGFLNALCKLAAVLGISIFTSFV) traverse the membrane as a helical segment. Residues 709-712 (GITK) are Extracellular-facing. The helical transmembrane segment at 713–731 (AAPILFASAALALGSSLAL) threads the bilayer. Over 732 to 742 (KLPETRGQVLQ) the chain is Cytoplasmic.

It belongs to the major facilitator superfamily. As to quaternary structure, interacts with SYT1/synaptotagmin-1 in a calcium-dependent manner. Binds the adapter protein complex AP-2. In terms of assembly, (Microbial infection) Interacts with C.botulinum neurotoxin type A2 (BoNT/A, botA). Interaction is improved by glycosylation of SV2. In terms of processing, phosphorylation by CK1 of the N-terminal cytoplasmic domain regulates interaction with SYT1. N-glycosylated.

It localises to the presynapse. The protein resides in the cytoplasmic vesicle. Its subcellular location is the secretory vesicle. It is found in the synaptic vesicle membrane. Plays a role in the control of regulated secretion in neural and endocrine cells, enhancing selectively low-frequency neurotransmission. Positively regulates vesicle fusion by maintaining the readily releasable pool of secretory vesicles. In terms of biological role, (Microbial infection) Receptor for the C.botulinum neurotoxin type A2 (BoNT/A, botA); glycosylation is not essential but enhances the interaction. Probably also serves as a receptor for the closely related C.botulinum neurotoxin type A1. The sequence is that of Synaptic vesicle glycoprotein 2A (SV2A) from Homo sapiens (Human).